A 592-amino-acid polypeptide reads, in one-letter code: PiggyBac transposable element-derived protein 2 (592 aa).

Positions 31–69 (EEEESNNNREEIFIAPPDNAAGEFTDEDSGDEDSQRGAH) are disordered.

The polypeptide is PiggyBac transposable element-derived protein 2 (PGBD2) (Homo sapiens (Human)).